Here is a 167-residue protein sequence, read N- to C-terminus: N5-carboxyaminoimidazole ribonucleotide mutase (167 aa).

Residues serine 11, aspartate 14, and arginine 41 each contribute to the substrate site.

The protein belongs to the AIR carboxylase family. Class I subfamily.

The enzyme catalyses 5-carboxyamino-1-(5-phospho-D-ribosyl)imidazole + H(+) = 5-amino-1-(5-phospho-D-ribosyl)imidazole-4-carboxylate. Its pathway is purine metabolism; IMP biosynthesis via de novo pathway; 5-amino-1-(5-phospho-D-ribosyl)imidazole-4-carboxylate from 5-amino-1-(5-phospho-D-ribosyl)imidazole (N5-CAIR route): step 2/2. Functionally, catalyzes the conversion of N5-carboxyaminoimidazole ribonucleotide (N5-CAIR) to 4-carboxy-5-aminoimidazole ribonucleotide (CAIR). This Aquifex aeolicus (strain VF5) protein is N5-carboxyaminoimidazole ribonucleotide mutase.